The primary structure comprises 228 residues: Ras-related protein Rab-33B (228 aa).

Residues N41, V42, G43, K44, T45, C46, T60, and T63 each contribute to the GTP site. T45 serves as a coordination point for Mg(2+). The short motif at 54-66 (GRFPQRTEATIGV) is the Switch 1 element. Residues T63 and D86 each coordinate Mg(2+). Residues 87–106 (TAGQERFRKSMVQHYYRNVH) carry the Switch 2 motif. Positions 89, 146, 147, 149, 177, and 178 each coordinate GTP. 2 S-geranylgeranyl cysteine lipidation sites follow: C226 and C228. A Cysteine methyl ester modification is found at C228.

The protein belongs to the small GTPase superfamily. Rab family. In terms of assembly, interacts (GTP- and GDP-bound forms) with ATG16L1; the complex consists of a tetramer where two RAB33B molecules bind independently one molecule of the ATG16L1 homodimer; the interaction promotes ATG12-ATG5-ATG16L1 complex recruitment to phagophores. Interacts with ATG16L2; however interaction is approximately hundred times lower than for ATG16L1. Interacts with RIC1 (via C-terminus domain); the interaction is direct with a preference for RAB33B-GTP. Interacts with RGP1. It depends on Mg(2+) as a cofactor.

It is found in the golgi apparatus membrane. The protein localises to the golgi apparatus. The protein resides in the cis-Golgi network. It localises to the preautophagosomal structure membrane. The catalysed reaction is GTP + H2O = GDP + phosphate + H(+). With respect to regulation, regulated by guanine nucleotide exchange factors (GEFs) which promote the exchange of bound GDP for free GTP. Regulated by GTPase activating proteins (GAPs) such as SGSM2 which increase the GTP hydrolysis activity. Inhibited by GDP dissociation inhibitors (GDIs). Functionally, the small GTPases Rab are key regulators of intracellular membrane trafficking, from the formation of transport vesicles to their fusion with membranes. Rabs cycle between an inactive GDP-bound form and an active GTP-bound form that is able to recruit to membranes different sets of downstream effectors directly responsible for vesicle formation, movement, tethering and fusion. RAB33B acts, in coordination with RAB6A, to regulate intra-Golgi retrograde trafficking. Participates in autophagosome formation by recruiting the ATG12-ATG5-ATG16L1 complex to phagophores, probably in a nucleotide-independent manner. The chain is Ras-related protein Rab-33B (RAB33B) from Gallus gallus (Chicken).